A 433-amino-acid polypeptide reads, in one-letter code: Glutamate-1-semialdehyde 2,1-aminomutase (433 aa).

An N6-(pyridoxal phosphate)lysine modification is found at Lys-271.

This sequence belongs to the class-III pyridoxal-phosphate-dependent aminotransferase family. HemL subfamily. In terms of assembly, homodimer. Pyridoxal 5'-phosphate is required as a cofactor.

Its subcellular location is the cytoplasm. It catalyses the reaction (S)-4-amino-5-oxopentanoate = 5-aminolevulinate. It participates in porphyrin-containing compound metabolism; protoporphyrin-IX biosynthesis; 5-aminolevulinate from L-glutamyl-tRNA(Glu): step 2/2. Its pathway is porphyrin-containing compound metabolism; chlorophyll biosynthesis. The chain is Glutamate-1-semialdehyde 2,1-aminomutase from Prochlorococcus marinus (strain MIT 9301).